The chain runs to 706 residues: Ribosomal RNA large subunit methyltransferase K/L (706 aa).

Residues 43–154 (LLYQSLLWSR…RDMASVALDL (112 aa)) form the THUMP domain.

Belongs to the methyltransferase superfamily. RlmKL family.

The protein resides in the cytoplasm. It catalyses the reaction guanosine(2445) in 23S rRNA + S-adenosyl-L-methionine = N(2)-methylguanosine(2445) in 23S rRNA + S-adenosyl-L-homocysteine + H(+). The enzyme catalyses guanosine(2069) in 23S rRNA + S-adenosyl-L-methionine = N(2)-methylguanosine(2069) in 23S rRNA + S-adenosyl-L-homocysteine + H(+). Functionally, specifically methylates the guanine in position 2445 (m2G2445) and the guanine in position 2069 (m7G2069) of 23S rRNA. The chain is Ribosomal RNA large subunit methyltransferase K/L from Serratia proteamaculans (strain 568).